A 302-amino-acid polypeptide reads, in one-letter code: MDQKRLTHLRQLEAESIHIIREVAAEFSNPVMLYSIGKDSSVMLHLARKAFYPGTLPFPLLHVDTGWKFREMYEFRDRTAKAYGCELLVHKNPEGVAMGINPFVHGSAKHTDIMKTEGLKQALNKYGFDAAFGGARRDEEKSRAKERIYSFRDRFHRWDPKNQRPELWHNYNGQINKGESIRVFPLSNWTEQDIWQYIWLENIDIVPLYLAAERPVLERDGMLMMIDDNRINLQPGEVIKKRMVRFRTLGCWPLTGAVESNAQTLPEIIEEMLVSTTSERQGRVIDRDQAGSMELKKRQGYF.

It belongs to the PAPS reductase family. CysD subfamily. Heterodimer composed of CysD, the smaller subunit, and CysN.

The catalysed reaction is sulfate + ATP + H(+) = adenosine 5'-phosphosulfate + diphosphate. It participates in sulfur metabolism; hydrogen sulfide biosynthesis; sulfite from sulfate: step 1/3. Functionally, with CysN forms the ATP sulfurylase (ATPS) that catalyzes the adenylation of sulfate producing adenosine 5'-phosphosulfate (APS) and diphosphate, the first enzymatic step in sulfur assimilation pathway. APS synthesis involves the formation of a high-energy phosphoric-sulfuric acid anhydride bond driven by GTP hydrolysis by CysN coupled to ATP hydrolysis by CysD. The polypeptide is Sulfate adenylyltransferase subunit 2 (Escherichia coli O6:K15:H31 (strain 536 / UPEC)).